Here is a 31-residue protein sequence, read N- to C-terminus: Cyclotide Hyfl-A (31 aa).

Positions 1-31 (SISCGESCVYIPCTVTALVGCTCKDKVCYLN) form a cross-link, cyclopeptide (Ser-Asn). Disulfide bonds link Cys-4/Cys-21, Cys-8/Cys-23, and Cys-13/Cys-28.

The protein belongs to the cyclotide family. Bracelet subfamily. Post-translationally, this is a cyclic peptide.

Functionally, probably participates in a plant defense mechanism. The sequence is that of Cyclotide Hyfl-A from Hybanthus floribundus (Greenviolet).